The following is a 156-amino-acid chain: Small ribosomal subunit protein uS7 (156 aa).

It belongs to the universal ribosomal protein uS7 family. Part of the 30S ribosomal subunit. Contacts proteins S9 and S11.

Functionally, one of the primary rRNA binding proteins, it binds directly to 16S rRNA where it nucleates assembly of the head domain of the 30S subunit. Is located at the subunit interface close to the decoding center, probably blocks exit of the E-site tRNA. This is Small ribosomal subunit protein uS7 from Parasynechococcus marenigrum (strain WH8102).